Consider the following 220-residue polypeptide: Adenylate kinase (220 aa).

Residue 13 to 18 (GAGKGT) coordinates ATP. Positions 33 to 62 (STGDILRAAVKEGTPLGLEAQSYMNRGALV) are NMP. AMP is bound by residues threonine 34, arginine 39, 60-62 (ALV), 88-91 (GFPR), and glutamine 95. Residues 129–170 (GRRTCPLCKRIFHVRFNPPPAAPPFCTDHTDCPSELVQRPDD) form an LID region. An ATP-binding site is contributed by arginine 130. Residues cysteine 133 and cysteine 136 each contribute to the Zn(2+) site. An ATP-binding site is contributed by 139–140 (IF). Zn(2+)-binding residues include aspartate 156 and cysteine 160. The AMP site is built by arginine 167 and arginine 178. Arginine 206 is a binding site for ATP.

It belongs to the adenylate kinase family. Monomer.

It localises to the cytoplasm. It catalyses the reaction AMP + ATP = 2 ADP. It participates in purine metabolism; AMP biosynthesis via salvage pathway; AMP from ADP: step 1/1. Its function is as follows. Catalyzes the reversible transfer of the terminal phosphate group between ATP and AMP. Plays an important role in cellular energy homeostasis and in adenine nucleotide metabolism. The protein is Adenylate kinase of Gloeobacter violaceus (strain ATCC 29082 / PCC 7421).